The chain runs to 292 residues: 11-beta-hydroxysteroid dehydrogenase 1 (292 aa).

Residues 1 to 7 (MAFMKKY) lie on the Cytoplasmic side of the membrane. The chain crosses the membrane as a helical; Signal-anchor for type II membrane protein span at residues 8 to 24 (LLPILGIFLAYYYYSAN). Residues 25-292 (EEFRPEMLRG…KYNMERFINN (268 aa)) lie on the Lumenal side of the membrane. NADP(+)-binding positions include 41–67 (GASKGIGREMAYHLARMGAHVVVTARS) and 92–93 (TM). Asparagine 95 is a glycosylation site (N-linked (GlcNAc...) asparagine). 119–121 (NHI) is an NADP(+) binding site. Residue serine 170 participates in substrate binding. The active-site Proton acceptor is tyrosine 183. 183-187 (YSASK) serves as a coordination point for NADP(+). Asparagine 207 carries N-linked (GlcNAc...) asparagine glycosylation. Residues 216 to 222 (GLIDTDT) and 218 to 222 (IDTDT) contribute to the NADP(+) site.

The protein belongs to the short-chain dehydrogenases/reductases (SDR) family. Homodimer. As to expression, liver, kidney, lung, hypothalamus, anterior pituitary and placenta.

Its subcellular location is the endoplasmic reticulum membrane. The catalysed reaction is an 11beta-hydroxysteroid + NADP(+) = an 11-oxosteroid + NADPH + H(+). The enzyme catalyses corticosterone + NADP(+) = 11-dehydrocorticosterone + NADPH + H(+). It carries out the reaction cortisone + NADPH + H(+) = cortisol + NADP(+). It catalyses the reaction a 7beta-hydroxysteroid + NADP(+) = a 7-oxosteroid + NADPH + H(+). The catalysed reaction is 7-oxocholesterol + NADPH + H(+) = 7beta-hydroxycholesterol + NADP(+). The enzyme catalyses chenodeoxycholate + NADP(+) = 7-oxolithocholate + NADPH + H(+). It carries out the reaction 7-oxolithocholate + NADPH + H(+) = ursodeoxycholate + NADP(+). It catalyses the reaction glycochenodeoxycholate + NADP(+) = 7-oxoglycolithocholate + NADPH + H(+). The catalysed reaction is taurochenodeoxycholate + NADP(+) = 7-oxotaurolithocholate + NADPH + H(+). The enzyme catalyses tauroursodeoxycholate + NADP(+) = 7-oxotaurolithocholate + NADPH + H(+). It carries out the reaction glycoursodeoxycholate + NADP(+) = 7-oxoglycolithocholate + NADPH + H(+). It catalyses the reaction 7-oxopregnenolone + NADPH + H(+) = 7beta-hydroxypregnenolone + NADP(+). The catalysed reaction is 3beta,7alpha-dihydroxyandrost-5-en-17-one + NADP(+) = 3beta-hydroxy-5-androstene-7,17-dione + NADPH + H(+). The enzyme catalyses 3beta-hydroxy-5-androstene-7,17-dione + NADPH + H(+) = 3beta,7beta-dihydroxyandrost-5-en-17-one + NADP(+). It carries out the reaction 3beta-hydroxy-5alpha-androstane-7,17-dione + NADPH + H(+) = 3beta,7beta-dihydroxy-5alpha-androstan-17-one + NADP(+). Functionally, controls the reversible conversion of biologically active glucocorticoids such as cortisone to cortisol, and 11-dehydrocorticosterone to corticosterone in the presence of NADP(H). Participates in the corticosteroid receptor-mediated anti-inflammatory response, as well as metabolic and homeostatic processes. Plays a role in the secretion of aqueous humor in the eye, maintaining a normotensive, intraocular environment. Bidirectional in vitro, predominantly functions as a reductase in vivo, thereby increasing the concentration of active glucocorticoids. It has broad substrate specificity, besides glucocorticoids, it accepts other steroid and sterol substrates. Interconverts 7-oxo- and 7-hydroxy-neurosteroids such as 7-oxopregnenolone and 7beta-hydroxypregnenolone, 7-oxodehydroepiandrosterone (3beta-hydroxy-5-androstene-7,17-dione) and 7beta-hydroxydehydroepiandrosterone (3beta,7beta-dihydroxyandrost-5-en-17-one), among others. Catalyzes the stereo-specific conversion of the major dietary oxysterol, 7-ketocholesterol (7-oxocholesterol), into the more polar 7-beta-hydroxycholesterol metabolite. 7-oxocholesterol is one of the most important oxysterols, it participates in several events such as induction of apoptosis, accumulation in atherosclerotic lesions, lipid peroxidation, and induction of foam cell formation. Mediates the 7-oxo reduction of 7-oxolithocholate mainly to chenodeoxycholate, and to a lesser extent to ursodeoxycholate, both in its free form and when conjugated to glycine or taurine, providing a link between glucocorticoid activation and bile acid metabolism. Catalyzes the synthesis of 7-beta-25-dihydroxycholesterol from 7-oxo-25-hydroxycholesterol in vitro, which acts as a ligand for the G-protein-coupled receptor (GPCR) Epstein-Barr virus-induced gene 2 (EBI2) and may thereby regulate immune cell migration. This Ovis aries (Sheep) protein is 11-beta-hydroxysteroid dehydrogenase 1 (HSD11B1).